The following is a 381-amino-acid chain: Putative F-box/kelch-repeat protein At1g60570 (381 aa).

In terms of domain architecture, F-box spans 19–65; that stretch reads PTLIPSLPEELILSILARVSRLSYRSLSLVCKRFHSLLTSGEIYRFR. 4 Kelch repeats span residues 126 to 169, 171 to 218, 220 to 266, and 269 to 314; these read KIYK…LIDG, IYVT…ERTN, LLVD…VIEN, and YDFF…DYGG.

The protein is Putative F-box/kelch-repeat protein At1g60570 of Arabidopsis thaliana (Mouse-ear cress).